Here is a 208-residue protein sequence, read N- to C-terminus: Phosphoribosyl-dephospho-CoA transferase (208 aa).

Active-site residues include Asp-133 and Asp-135.

It belongs to the MdcG family.

The enzyme catalyses apo-[malonate decarboxylase ACP] + 2'-(5''-triphospho-alpha-D-ribosyl)-3'-dephospho-CoA = holo-[malonate decarboxylase ACP] + diphosphate. Its function is as follows. Transfers 2'-(5-triphosphoribosyl)-3'-dephosphocoenzyme-A to the apo-[acyl-carrier-protein] of the malonate decarboxylase to yield holo-[acyl-carrier-protein]. The chain is Phosphoribosyl-dephospho-CoA transferase from Pseudomonas fluorescens (strain ATCC BAA-477 / NRRL B-23932 / Pf-5).